The primary structure comprises 133 residues: Fluoride-specific ion channel FluC 4 (133 aa).

Transmembrane regions (helical) follow at residues 7-27 (ILVL…SGYV), 37-57 (WGTF…AGLG), and 60-80 (LGGI…LLGG). 2 residues coordinate Na(+): G79 and T82. The chain crosses the membrane as a helical span at residues 107–127 (IVASALLCVLAVAAGYGGIMW).

Belongs to the fluoride channel Fluc/FEX (TC 1.A.43) family.

Its subcellular location is the cell inner membrane. The enzyme catalyses fluoride(in) = fluoride(out). Its activity is regulated as follows. Na(+) is not transported, but it plays an essential structural role and its presence is essential for fluoride channel function. In terms of biological role, fluoride-specific ion channel. Important for reducing fluoride concentration in the cell, thus reducing its toxicity. This Brucella abortus biovar 1 (strain 9-941) protein is Fluoride-specific ion channel FluC 4.